The chain runs to 1036 residues: Multiple C2 domain and transmembrane region protein 2 (1036 aa).

Positions M1–F110 constitute a C2 1 domain. 2 disordered regions span residues D137–K204 and R225–N246. Residues P146 to A155 show a composition bias toward polar residues. Over residues T158–E168 the composition is skewed to acidic residues. Over residues V190 to K204 the composition is skewed to basic and acidic residues. C2 domains are found at residues P277–Y399, V440–F563, and Y607–F734. Residues D316, D364, E366, and D372 each coordinate Ca(2+). Helical transmembrane passes span F871–I891 and L979–I999.

Belongs to the MCTP family. The cofactor is Ca(2+). As to expression, expressed in the vascular tissues of roots and rosette leaves. Accumulates in roots meristems. Observed in flowers.

The protein resides in the cell membrane. May function as a signaling molecule by regulating the trafficking of other regulators. This Arabidopsis thaliana (Mouse-ear cress) protein is Multiple C2 domain and transmembrane region protein 2.